Here is a 589-residue protein sequence, read N- to C-terminus: Protein FAM161B (589 aa).

3 disordered regions span residues 1 to 166 (MTVG…VCSW), 265 to 297 (KKEQ…RKIP), and 386 to 444 (AERR…GLAS). Residues 92–106 (PDSDLNDAEDEEDLE) are compositionally biased toward acidic residues. Over residues 151–166 (TSDSGPPSQHRSVCSW) the composition is skewed to polar residues. The span at 265-275 (KKEQQKEDAPQ) shows a compositional bias: basic and acidic residues. Basic residues predominate over residues 287–297 (SPKKATSRKIP). The segment covering 386-396 (AERRETRETTR) has biased composition (basic and acidic residues). Residues 510-577 (EEVFKAKLKE…ALKQAGLEEE (68 aa)) are a coiled coil.

Belongs to the FAM161 family. As to quaternary structure, interacts with FAM161A.

In Mus musculus (Mouse), this protein is Protein FAM161B (Fam161b).